A 206-amino-acid polypeptide reads, in one-letter code: Glycerol-3-phosphate acyltransferase 1 (206 aa).

The next 5 membrane-spanning stretches (helical) occupy residues 14–34 (IALA…GLIL), 67–87 (ATLL…SYFL), 91–111 (AAII…WIGF), 124–144 (LLGV…AVAF), and 148–168 (YSSL…WILG).

The protein belongs to the PlsY family. Probably interacts with PlsX.

Its subcellular location is the cell inner membrane. The enzyme catalyses an acyl phosphate + sn-glycerol 3-phosphate = a 1-acyl-sn-glycero-3-phosphate + phosphate. It functions in the pathway lipid metabolism; phospholipid metabolism. Catalyzes the transfer of an acyl group from acyl-phosphate (acyl-PO(4)) to glycerol-3-phosphate (G3P) to form lysophosphatidic acid (LPA). This enzyme utilizes acyl-phosphate as fatty acyl donor, but not acyl-CoA or acyl-ACP. The polypeptide is Glycerol-3-phosphate acyltransferase 1 (Rhizobium johnstonii (strain DSM 114642 / LMG 32736 / 3841) (Rhizobium leguminosarum bv. viciae)).